The primary structure comprises 834 residues: Protein ROOT HAIR DEFECTIVE 3 homolog 2 (834 aa).

Residues 1 to 683 are Cytoplasmic-facing; the sequence is MGENDDGCST…EAHKRNNNWL (683 aa). In terms of domain architecture, GB1/RHD3-type G spans 37 to 252; that stretch reads GLSYAVVAIM…ISPGGLAGDR (216 aa). 47-54 is a GTP binding site; the sequence is GPQSSGKS. A coiled-coil region spans residues 214–241; that stretch reads MIVALSSYEEKEKQFEQEVAELRQRFFH. A helical transmembrane segment spans residues 684-704; that stretch reads PPAWAIVLMIVLGFNEFMMLL. Residues 705–707 lie on the Lumenal side of the membrane; the sequence is KNP. The chain crosses the membrane as a helical span at residues 708–728; the sequence is LYLLGFFVAFLLSKALWVQLD. Residues 729–834 lie on the Cytoplasmic side of the membrane; the sequence is IPREFQHGAV…NVQESEISQM (106 aa). Residues 767-783 are compositionally biased toward polar residues; sequence TTQEVPDLSASQTYRQQ. A disordered region spans residues 767–834; the sequence is TTQEVPDLSA…NVQESEISQM (68 aa). The span at 784 to 803 shows a compositional bias: low complexity; sequence SPSHSISSTISESVASNISS. Polar residues predominate over residues 823–834; sequence TNNVQESEISQM.

It belongs to the TRAFAC class dynamin-like GTPase superfamily. GB1/RHD3 GTPase family. RHD3 subfamily. As to expression, expressed in roots, leaves, stems and flowers.

The protein localises to the endoplasmic reticulum membrane. Its function is as follows. Probable GTP-binding protein that may be involved in cell development. In Arabidopsis thaliana (Mouse-ear cress), this protein is Protein ROOT HAIR DEFECTIVE 3 homolog 2.